The chain runs to 732 residues: Elongation factor 2 (732 aa).

One can recognise a tr-type G domain in the interval 19 to 230 (ERIRNMGIAA…VSFKDIVELT (212 aa)). GTP-binding positions include 28–35 (AHIDHGKT), 94–98 (DTPGH), and 148–151 (NKVD). Histidine 597 bears the Diphthamide mark.

This sequence belongs to the TRAFAC class translation factor GTPase superfamily. Classic translation factor GTPase family. EF-G/EF-2 subfamily.

The protein localises to the cytoplasm. Functionally, catalyzes the GTP-dependent ribosomal translocation step during translation elongation. During this step, the ribosome changes from the pre-translocational (PRE) to the post-translocational (POST) state as the newly formed A-site-bound peptidyl-tRNA and P-site-bound deacylated tRNA move to the P and E sites, respectively. Catalyzes the coordinated movement of the two tRNA molecules, the mRNA and conformational changes in the ribosome. This Thermococcus gammatolerans (strain DSM 15229 / JCM 11827 / EJ3) protein is Elongation factor 2.